An 86-amino-acid chain; its full sequence is Small ribosomal subunit protein bS16 (86 aa).

Belongs to the bacterial ribosomal protein bS16 family.

This Borrelia garinii subsp. bavariensis (strain ATCC BAA-2496 / DSM 23469 / PBi) (Borreliella bavariensis) protein is Small ribosomal subunit protein bS16.